The primary structure comprises 253 residues: uncharacterized protein (253 aa).

It belongs to the A.longa ORF167/ORF288 family.

It is found in the plastid. This is an uncharacterized protein from Euglena longa (Euglenophycean alga).